The following is a 130-amino-acid chain: Phosphomevalonate dehydratase small subunit (130 aa).

The active-site Proton acceptor is Ser-62.

This sequence belongs to the AcnX type II small subunit family. Heterodimer composed of a large subunit (PMDh-L) and a small subunit (PMDh-S).

It catalyses the reaction (R)-5-phosphomevalonate = (2E)-3-methyl-5-phosphooxypent-2-enoate + H2O. Its pathway is isoprenoid biosynthesis; isopentenyl diphosphate biosynthesis via mevalonate pathway. Functionally, component of a hydro-lyase that catalyzes the dehydration of mevalonate 5-phosphate (MVA5P) to form trans-anhydromevalonate 5-phosphate (tAHMP). Involved in the archaeal mevalonate (MVA) pathway, which provides fundamental precursors for isoprenoid biosynthesis, such as isopentenyl diphosphate (IPP) and dimethylallyl diphosphate (DMAPP). The sequence is that of Phosphomevalonate dehydratase small subunit from Thermococcus sibiricus (strain DSM 12597 / MM 739).